Consider the following 428-residue polypeptide: Serine--tRNA ligase (428 aa).

An L-serine-binding site is contributed by 231–233 (TAE). Residue 262 to 264 (RAE) coordinates ATP. Residue Glu285 participates in L-serine binding. 349–352 (EISS) is an ATP binding site. An L-serine-binding site is contributed by Ser385.

This sequence belongs to the class-II aminoacyl-tRNA synthetase family. Type-1 seryl-tRNA synthetase subfamily. In terms of assembly, homodimer. The tRNA molecule binds across the dimer.

The protein localises to the cytoplasm. The enzyme catalyses tRNA(Ser) + L-serine + ATP = L-seryl-tRNA(Ser) + AMP + diphosphate + H(+). It carries out the reaction tRNA(Sec) + L-serine + ATP = L-seryl-tRNA(Sec) + AMP + diphosphate + H(+). The protein operates within aminoacyl-tRNA biosynthesis; selenocysteinyl-tRNA(Sec) biosynthesis; L-seryl-tRNA(Sec) from L-serine and tRNA(Sec): step 1/1. In terms of biological role, catalyzes the attachment of serine to tRNA(Ser). Is also able to aminoacylate tRNA(Sec) with serine, to form the misacylated tRNA L-seryl-tRNA(Sec), which will be further converted into selenocysteinyl-tRNA(Sec). This Methylorubrum populi (strain ATCC BAA-705 / NCIMB 13946 / BJ001) (Methylobacterium populi) protein is Serine--tRNA ligase.